Consider the following 184-residue polypeptide: Jacalin-related lectin 2 (184 aa).

The Jacalin-type lectin domain maps to 4–163; the sequence is KIKIGPVGTD…LQNIGVYLQP (160 aa).

This sequence belongs to the jacalin lectin family.

This is Jacalin-related lectin 2 (JAL2) from Arabidopsis thaliana (Mouse-ear cress).